Here is an 814-residue protein sequence, read N- to C-terminus: Phenylalanine--tRNA ligase beta subunit (814 aa).

Residues 39–153 form the tRNA-binding domain; it reads SKNVNGVVLG…LKHELGTPVS (115 aa). The region spanning 414 to 500 is the B5 domain; it reads NEDIFIKLRR…RLIGYDRFDL (87 aa). The Mg(2+) site is built by aspartate 478, aspartate 484, glutamate 487, and glutamate 488. The FDX-ACB domain occupies 720–813; that stretch reads PIVPKIERDI…IEKSFQTKLR (94 aa).

It belongs to the phenylalanyl-tRNA synthetase beta subunit family. Type 1 subfamily. In terms of assembly, tetramer of two alpha and two beta subunits. It depends on Mg(2+) as a cofactor.

It localises to the cytoplasm. It carries out the reaction tRNA(Phe) + L-phenylalanine + ATP = L-phenylalanyl-tRNA(Phe) + AMP + diphosphate + H(+). The chain is Phenylalanine--tRNA ligase beta subunit from Prochlorococcus marinus (strain MIT 9312).